A 434-amino-acid polypeptide reads, in one-letter code: V-type ATP synthase beta chain (434 aa).

Belongs to the ATPase alpha/beta chains family.

In terms of biological role, produces ATP from ADP in the presence of a proton gradient across the membrane. The V-type beta chain is a regulatory subunit. In Borreliella burgdorferi (strain ATCC 35210 / DSM 4680 / CIP 102532 / B31) (Borrelia burgdorferi), this protein is V-type ATP synthase beta chain (atpB).